We begin with the raw amino-acid sequence, 574 residues long: ATP-dependent RNA helicase RhlB (574 aa).

The Q motif signature appears at 9-37 (VTFSSFDLHPALVAGLESAGFTRCTPIQA). The region spanning 40–220 (LPVALPGGDV…YEHMNEPEKL (181 aa)) is the Helicase ATP-binding domain. 53–60 (AQTGTGKT) provides a ligand contact to ATP. Residues 166–169 (DEAD) carry the DEAD box motif. The 163-residue stretch at 231-393 (RVRQRIYFPS…PVTSELLTPL (163 aa)) folds into the Helicase C-terminal domain. Positions 423–432 (EQRAAEEQRR) are enriched in basic and acidic residues. Residues 423-574 (EQRAAEEQRR…RRLRSLVSGN (152 aa)) form a disordered region. Over residues 435 to 449 (GRSGPGGGSRSGSGG) the composition is skewed to gly residues. Residues 477–495 (AAAAQTEKPVVAAAAAQAP) are compositionally biased toward low complexity. The segment covering 506–515 (PRKRRRRRNG) has biased composition (basic residues). Composition is skewed to low complexity over residues 523 to 535 (PAVA…APAA) and 553 to 562 (SSGSPSLLGR).

Belongs to the DEAD box helicase family. RhlB subfamily. In terms of assembly, component of the RNA degradosome, which is a multiprotein complex involved in RNA processing and mRNA degradation.

It is found in the cytoplasm. The catalysed reaction is ATP + H2O = ADP + phosphate + H(+). Its function is as follows. DEAD-box RNA helicase involved in RNA degradation. Has RNA-dependent ATPase activity and unwinds double-stranded RNA. The protein is ATP-dependent RNA helicase RhlB of Xanthomonas oryzae pv. oryzae (strain KACC10331 / KXO85).